The chain runs to 432 residues: Tol-Pal system protein TolB (432 aa).

The signal sequence occupies residues 1–21 (MKKVIYTIVGFVFMWSTSVYA).

This sequence belongs to the TolB family. The Tol-Pal system is composed of five core proteins: the inner membrane proteins TolA, TolQ and TolR, the periplasmic protein TolB and the outer membrane protein Pal. They form a network linking the inner and outer membranes and the peptidoglycan layer.

It is found in the periplasm. Functionally, part of the Tol-Pal system, which plays a role in outer membrane invagination during cell division and is important for maintaining outer membrane integrity. In Hydrogenovibrio crunogenus (strain DSM 25203 / XCL-2) (Thiomicrospira crunogena), this protein is Tol-Pal system protein TolB.